Here is a 282-residue protein sequence, read N- to C-terminus: Protein OS-9 homolog (282 aa).

The signal sequence occupies residues 1-23 (MRITQILLCLVIVALSSSSHVWS). N-linked (GlcNAc...) asparagine glycosylation is present at N94. The MRH domain maps to 120–239 (EKCLFRQEGW…TVQCPTLCKH (120 aa)). The cysteines at positions 122 and 135 are disulfide-linked. Positions 129, 130, and 142 each coordinate a mannooligosaccharide derivative. N-linked (GlcNAc...) asparagine glycosylation is found at N169 and N190. Cystine bridges form between C194/C225 and C209/C237. The a mannooligosaccharide derivative site is built by D195, R201, E221, and Y227. Residues 262-276 (DATRNKEEQAVDESP) are compositionally biased toward basic and acidic residues. A disordered region spans residues 262 to 282 (DATRNKEEQAVDESPKMIADS).

The protein belongs to the OS-9 family. Interacts with HRD3A.

Its subcellular location is the endoplasmic reticulum. Lectin which functions in endoplasmic reticulum (ER) quality control and ER-associated degradation (ERAD). May bind terminally misfolded non-glycosylated proteins as well as improperly folded glycoproteins, retain them in the ER, and possibly transfer them to the ubiquitination machinery and promote their degradation. Targets the misfolded LRR receptor kinase BRI1 and the misfolded receptor-like kinase EFR. The chain is Protein OS-9 homolog from Arabidopsis thaliana (Mouse-ear cress).